We begin with the raw amino-acid sequence, 960 residues long: MASQHSRRSREAPRPEMSIGRYTRLDEIGRGSFATVYQGVHTKSKTYVAIKSVNLSKLNKKLKENLSSEIDILKGLHHPHIVALIDCHESTSHIHLVMEYCALGDLSLFIKRRDTLGSHKYTRDMIAKYPNPPGGSLNEVVTRHFLKQLSSALKFLRDRNLIHRDIKPQNLLLCPSPSSYRSGHAQVMPYKGSDDSYEPTTGLESLPMLKIADFGFARSLPATSLAETLCGSPLYMAPEILRYEKYDAKADLWSVGTVLYEMVVGRPPFRATNHVELLRKIEKGEDRIRFPEDNPASDDIKKLIRGLLKRNPVERLNFPEFFSNNVINDPIPGLLADDAPGPPQSPRPRQLVGKAEESPYDTGPEDKLAYPPGQRPVTTHPKSGTPPTATDMRRMGSADRPAPAISKEQQPGGTPPQRPGPVSLATAPGRQELIDRNATTAAMDRQRHRNTYAGAPKASDSTIRAQEARDRAAQEVAFERDYVVVEKRAVEVNAFADELAHSPRLQGGLSRPGQTGAGSRRTTTQGLPTVSPSSPHANAAKAMQVVSGRARADSTHQRQHSYERRYGQSPTSATSAISKALNMASGRLFGMGFSPPLAITKGGRSPPLAYNPFPAYPPVHASLLITGDGSKPNATGDEDCKAVQEIEECATRSDVVFGFAEVKYKQLIPLAPSASTDPSARPMDTNVEPDSADSDDGLTVDAIVTLSEEALVLYVKALSLLAKSMDIAGAWWSRKNREEVYGESPTKDSMSAVAGTRINYVVQWVRSRFNEVIEKAEFVRLKLIEGQRRLPPDHPSHPDNHSISSTAGSSSTADVVVSPGVTAERLMYDRALEMSRAAAINELTGEDLANCEITYVTAIRMLEAVLEDDGMRSMPGSNIERQSSSQGGEKVVLDELQVEDRQVVVKLVSSMRGRLASVRKKVAVLAKRSSAPTPTAGSAGKTPTSNISPVTYATGVTPPR.

A Protein kinase domain is found at 22–327 (YTRLDEIGRG…FPEFFSNNVI (306 aa)). ATP contacts are provided by residues 28–36 (IGRGSFATV) and Lys51. Catalysis depends on Asp165, which acts as the Proton acceptor. Disordered stretches follow at residues 333–467 (GLLA…RAQE), 503–538 (PRLQ…PHAN), 550–571 (ARAD…QSPT), 673–694 (SAST…SADS), 789–815 (RLPP…TADV), and 926–960 (AKRS…TPPR). 2 stretches are compositionally biased toward polar residues: residues 376-388 (PVTT…TPPT) and 520-536 (RRTT…SSPH). A compositionally biased stretch (basic and acidic residues) spans 550-566 (ARADSTHQRQHSYERRY). A compositionally biased stretch (basic and acidic residues) spans 789–800 (RLPPDHPSHPDN). The segment covering 801-815 (HSISSTAGSSSTADV) has biased composition (low complexity). Residues 930–951 (SAPTPTAGSAGKTPTSNISPVT) are compositionally biased toward polar residues.

It belongs to the protein kinase superfamily. Ser/Thr protein kinase family. APG1/unc-51/ULK1 subfamily. Homodimer. Forms a ternary complex with ATG13 and ATG17.

The protein localises to the cytoplasm. It localises to the preautophagosomal structure membrane. It carries out the reaction L-seryl-[protein] + ATP = O-phospho-L-seryl-[protein] + ADP + H(+). The enzyme catalyses L-threonyl-[protein] + ATP = O-phospho-L-threonyl-[protein] + ADP + H(+). Functionally, serine/threonine protein kinase involved in the cytoplasm to vacuole transport (Cvt) and found to be essential in autophagy, where it is required for the formation of autophagosomes. Involved in the clearance of protein aggregates which cannot be efficiently cleared by the proteasome. Required for selective autophagic degradation of the nucleus (nucleophagy) as well as for mitophagy which contributes to regulate mitochondrial quantity and quality by eliminating the mitochondria to a basal level to fulfill cellular energy requirements and preventing excess ROS production. Also involved in endoplasmic reticulum-specific autophagic process, in selective removal of ER-associated degradation (ERAD) substrates. Plays a key role in ATG9 and ATG23 cycling through the pre-autophagosomal structure and is necessary to promote ATG18 binding to ATG9 through phosphorylation of ATG9. Catalyzes phosphorylation of ATG4, decreasing the interaction between ATG4 and ATG8 and impairing deconjugation of PE-conjugated forms of ATG8. This is Serine/threonine-protein kinase atg1 from Penicillium rubens (strain ATCC 28089 / DSM 1075 / NRRL 1951 / Wisconsin 54-1255) (Penicillium chrysogenum).